The primary structure comprises 153 residues: Large ribosomal subunit protein uL15 (153 aa).

The disordered stretch occupies residues R21–R41. A compositionally biased stretch (gly residues) spans I23–I35.

It belongs to the universal ribosomal protein uL15 family. Part of the 50S ribosomal subunit.

Binds to the 23S rRNA. This is Large ribosomal subunit protein uL15 from Rickettsia massiliae (strain Mtu5).